Here is a 284-residue protein sequence, read N- to C-terminus: Large ribosomal subunit protein uL2 (284 aa).

The interval 232–284 (RGTAMNPVDHPHGGGEGRHNGYIPRTPWGKVTKGLKTRDKRKSNKWIVKDRRK) is disordered. Residues 240–250 (DHPHGGGEGRH) are compositionally biased toward basic and acidic residues. A compositionally biased stretch (basic residues) spans 264–284 (KGLKTRDKRKSNKWIVKDRRK).

This sequence belongs to the universal ribosomal protein uL2 family. Part of the 50S ribosomal subunit. Forms a bridge to the 30S subunit in the 70S ribosome.

In terms of biological role, one of the primary rRNA binding proteins. Required for association of the 30S and 50S subunits to form the 70S ribosome, for tRNA binding and peptide bond formation. It has been suggested to have peptidyltransferase activity; this is somewhat controversial. Makes several contacts with the 16S rRNA in the 70S ribosome. The chain is Large ribosomal subunit protein uL2 from Chlamydia abortus (strain DSM 27085 / S26/3) (Chlamydophila abortus).